A 613-amino-acid polypeptide reads, in one-letter code: Carotenoid dioxygenase (613 aa).

The disordered stretch occupies residues 1 to 25; that stretch reads MSPHEVIGTVPKNSTTFRTQADEHD. Fe(2+) contacts are provided by H261, H313, H383, and H595.

It belongs to the carotenoid oxygenase family. Fe(2+) is required as a cofactor.

The protein localises to the cytoplasm. It localises to the cytosol. The catalysed reaction is torulene + O2 = 4'-apo-beta-carotenal + 3-methyl-2-butenal. It participates in carotenoid biosynthesis. Functionally, torulene dioxygenase; part of pathway that mediates the biosynthesis of neurosporaxanthin, a carboxylic apocarotenoid acting as an essential protective pigments and leading to orange pigmentation. Cao-2 mediates the cleavage of torulene into beta-apo-4'-carotenal, the aldehyde corresponding to the acidic neurosporaxanthin. Is not able to use gamma-carotene (that it is not desaturated at the C4'-C5' bond) as substrate, which suggests a high specificity of cao-2 in cleaving the C4'-C5' double bond. Neurosporaxanthin is synthesized from geranyl-geranyl pyrophosphate (GGPP) through several enzymatic activities. Phytoene synthase activity performed by the bifunctional enzyme al-2 first produces phytoene from geranyl-geranyl pyrophosphate (GGPP). The phytoene dehydrogenase al-1 then introduces 5 desaturations to lead to 3,4-didehydrolycopene via the intermediates phytofluene, zeta-carotene, neurosporene and lycopene. Al-2 cyclase activity then converts 3,4-didehydrolycopene into torulene. Al-2 can also convet lycopene into gamma-carotene which in turn is converted to beta-carotene by an additional al-2 cyclization reaction. Torulene is the substrate of the dioxidase cao-2 that breaks the molecule, removing five carbon atoms to yield beta-apo-4'-carotenal, whereas the aldehyde dehydrogenase ylo-1 mediates the last step by converting beta-apo-4'-carotenal into neurosporaxanthin. The chain is Carotenoid dioxygenase from Neurospora crassa (strain ATCC 24698 / 74-OR23-1A / CBS 708.71 / DSM 1257 / FGSC 987).